The following is a 344-amino-acid chain: MPKYPLLGMTLTELQSVTKDLGMPAFAAKQIASWLYDKKVTSIDEMTNLSLKHRELLKGEYDLGISAPVDEMRSVDGTVKYLYQVSDNHFVEAVYIPDEDRATLCVSSQVGCKMNCKFCMTGKQGFTASLTANQILNQIAALPEWDKLTNVVMMGMGEPLDNLDEVLKALHILTASYGYGWSPKRITLSSVGLRKGLQRFIEESECHLAISLHSPFPSQRSELMPAERAFSIKEMVDLLKNYDFSKQRRLSFEYIVFKGVNDSLIYAKELLKLLRGLDCRVNLIRFHAIPGVDLEGAGMETMTSFRDYLTSHGLFTTIRASRGEDIFAACGMLSTAKQEESNKN.

Glutamate 92 (proton acceptor) is an active-site residue. The Radical SAM core domain occupies 98–325 (DEDRATLCVS…TTIRASRGED (228 aa)). Cysteine 105 and cysteine 330 form a disulfide bridge. 3 residues coordinate [4Fe-4S] cluster: cysteine 112, cysteine 116, and cysteine 119. S-adenosyl-L-methionine-binding positions include 157 to 158 (GE), serine 189, 211 to 213 (SLH), and histidine 287. The S-methylcysteine intermediate role is filled by cysteine 330.

This sequence belongs to the radical SAM superfamily. RlmN family. Requires [4Fe-4S] cluster as cofactor.

Its subcellular location is the cytoplasm. The enzyme catalyses adenosine(2503) in 23S rRNA + 2 reduced [2Fe-2S]-[ferredoxin] + 2 S-adenosyl-L-methionine = 2-methyladenosine(2503) in 23S rRNA + 5'-deoxyadenosine + L-methionine + 2 oxidized [2Fe-2S]-[ferredoxin] + S-adenosyl-L-homocysteine. It carries out the reaction adenosine(37) in tRNA + 2 reduced [2Fe-2S]-[ferredoxin] + 2 S-adenosyl-L-methionine = 2-methyladenosine(37) in tRNA + 5'-deoxyadenosine + L-methionine + 2 oxidized [2Fe-2S]-[ferredoxin] + S-adenosyl-L-homocysteine. Functionally, specifically methylates position 2 of adenine 2503 in 23S rRNA and position 2 of adenine 37 in tRNAs. The sequence is that of Probable dual-specificity RNA methyltransferase RlmN from Bacteroides fragilis (strain YCH46).